A 413-amino-acid polypeptide reads, in one-letter code: MDTREAVHAAARRARTASRVLALLTTAQKDAALHAAADAVLAASADILAANAADIETARASGTEDSLLDRLRLTPERIEGIASGLRQVAGLPDPVGEVVRGSTLPNGLELRQLRVPLGVVGMVYEARPNVTVDAFGLALKSGNAALLRGSSSAAKSNAALVVALRTSLAAQQLPEDAVQLLPSDDRSSVTHLIQARGLVDVVIPRGGAGLISAVVRDATVPTIETGVGNCHVYVHSAADLEMAERILLNSKTRRPSVCNTAETVLIDAAIAETAVPKLLQALQTHSVTVHGDLPGLVPATESDWSEEYLTLDVALKVVDDLNAAVEHIDRYGTGHTEAIVTSDLAAAREFTARVDAAAVMVNASTAFTDGEQFGFGAEIGISTQKLHARGPMGLPELTSTKWIVWGDGHTRPV.

Belongs to the gamma-glutamyl phosphate reductase family.

It is found in the cytoplasm. The enzyme catalyses L-glutamate 5-semialdehyde + phosphate + NADP(+) = L-glutamyl 5-phosphate + NADPH + H(+). The protein operates within amino-acid biosynthesis; L-proline biosynthesis; L-glutamate 5-semialdehyde from L-glutamate: step 2/2. Its function is as follows. Catalyzes the NADPH-dependent reduction of L-glutamate 5-phosphate into L-glutamate 5-semialdehyde and phosphate. The product spontaneously undergoes cyclization to form 1-pyrroline-5-carboxylate. This chain is Gamma-glutamyl phosphate reductase, found in Rhodococcus jostii (strain RHA1).